The sequence spans 216 residues: Ribosomal RNA small subunit methyltransferase G (216 aa).

Residues Gly83, Met88, 134 to 135 (VE), and Arg149 contribute to the S-adenosyl-L-methionine site.

This sequence belongs to the methyltransferase superfamily. RNA methyltransferase RsmG family.

Its subcellular location is the cytoplasm. It catalyses the reaction guanosine(527) in 16S rRNA + S-adenosyl-L-methionine = N(7)-methylguanosine(527) in 16S rRNA + S-adenosyl-L-homocysteine. Its function is as follows. Specifically methylates the N7 position of guanine in position 527 of 16S rRNA. The chain is Ribosomal RNA small subunit methyltransferase G from Pseudomonas putida (strain GB-1).